The chain runs to 270 residues: Formamidopyrimidine-DNA glycosylase (270 aa).

Pro2 (schiff-base intermediate with DNA) is an active-site residue. Catalysis depends on Glu3, which acts as the Proton donor. The Proton donor; for beta-elimination activity role is filled by Lys58. DNA is bound by residues His91, Arg110, and Arg151. The FPG-type zinc finger occupies 236 to 270; it reads FVYGRGGEFCKVCGSTLREIRLGQRASVYCPRCQR. The Proton donor; for delta-elimination activity role is filled by Arg260.

It belongs to the FPG family. In terms of assembly, monomer. Requires Zn(2+) as cofactor.

It catalyses the reaction Hydrolysis of DNA containing ring-opened 7-methylguanine residues, releasing 2,6-diamino-4-hydroxy-5-(N-methyl)formamidopyrimidine.. It carries out the reaction 2'-deoxyribonucleotide-(2'-deoxyribose 5'-phosphate)-2'-deoxyribonucleotide-DNA = a 3'-end 2'-deoxyribonucleotide-(2,3-dehydro-2,3-deoxyribose 5'-phosphate)-DNA + a 5'-end 5'-phospho-2'-deoxyribonucleoside-DNA + H(+). Involved in base excision repair of DNA damaged by oxidation or by mutagenic agents. Acts as a DNA glycosylase that recognizes and removes damaged bases. Has a preference for oxidized purines, such as 7,8-dihydro-8-oxoguanine (8-oxoG). Has AP (apurinic/apyrimidinic) lyase activity and introduces nicks in the DNA strand. Cleaves the DNA backbone by beta-delta elimination to generate a single-strand break at the site of the removed base with both 3'- and 5'-phosphates. The chain is Formamidopyrimidine-DNA glycosylase from Pseudomonas paraeruginosa (strain DSM 24068 / PA7) (Pseudomonas aeruginosa (strain PA7)).